A 49-amino-acid chain; its full sequence is Osteocalcin (49 aa).

The Gla domain occupies 1–47 (YLDHGLGAPAPYPDPLEPKREVCELNPDCDELADHIGFQEAYRRFYG). A Hydroxyproline modification is found at Pro9. Ca(2+)-binding residues include Glu17, Glu21, Glu24, and Asp30. 3 positions are modified to 4-carboxyglutamate: Glu17, Glu21, and Glu24. The cysteines at positions 23 and 29 are disulfide-linked.

This sequence belongs to the osteocalcin/matrix Gla protein family. Gamma-carboxyglutamic acid residues are formed by vitamin K dependent carboxylation. These residues are essential for the binding of calcium.

Its subcellular location is the secreted. In terms of biological role, the carboxylated form is one of the main organic components of the bone matrix, which constitutes 1-2% of the total bone protein: it acts as a negative regulator of bone formation and is required to limit bone formation without impairing bone resorption or mineralization. The carboxylated form binds strongly to apatite and calcium. Functionally, the uncarboxylated form acts as a hormone secreted by osteoblasts, which regulates different cellular processes, such as energy metabolism, male fertility and brain development. Regulates of energy metabolism by acting as a hormone favoring pancreatic beta-cell proliferation, insulin secretion and sensitivity and energy expenditure. Uncarboxylated osteocalcin hormone also promotes testosterone production in the testes: acts as a ligand for G protein-coupled receptor GPRC6A at the surface of Leydig cells, initiating a signaling response that promotes the expression of enzymes required for testosterone synthesis in a CREB-dependent manner. Also acts as a regulator of brain development: osteocalcin hormone crosses the blood-brain barrier and acts as a ligand for GPR158 on neurons, initiating a signaling response that prevents neuronal apoptosis in the hippocampus, favors the synthesis of all monoamine neurotransmitters and inhibits that of gamma-aminobutyric acid (GABA). Osteocalcin also crosses the placenta during pregnancy and maternal osteocalcin is required for fetal brain development. The chain is Osteocalcin (BGLAP) from Bison priscus (Steppe wisent).